A 226-amino-acid chain; its full sequence is Eukaryotic translation initiation factor 3 subunit K (226 aa).

Positions 44–202 (YSLEVNLCLL…IVLPQNEFNH (159 aa)) constitute a PCI domain.

This sequence belongs to the eIF-3 subunit K family. Component of the eukaryotic translation initiation factor 3 (eIF-3) complex.

Its subcellular location is the cytoplasm. Functionally, component of the eukaryotic translation initiation factor 3 (eIF-3) complex, which is involved in protein synthesis of a specialized repertoire of mRNAs and, together with other initiation factors, stimulates binding of mRNA and methionyl-tRNAi to the 40S ribosome. The eIF-3 complex specifically targets and initiates translation of a subset of mRNAs involved in cell proliferation. This Arabidopsis thaliana (Mouse-ear cress) protein is Eukaryotic translation initiation factor 3 subunit K (TIF3K1).